Here is a 486-residue protein sequence, read N- to C-terminus: Nucleolar protein 56 (486 aa).

The region spanning 298-416 (CAPSLSALIG…VEDRLEYFTS (119 aa)) is the Nop domain. Residues 450 to 486 (KKAKRLAEESVTATAEAEVDEDAPKPKKKKKSKAGDE) form a disordered region. Over residues 475-486 (PKKKKKSKAGDE) the composition is skewed to basic residues.

The protein belongs to the NOP5/NOP56 family.

It is found in the nucleus. It localises to the nucleolus. Its function is as follows. Required for 60S ribosomal subunit synthesis. The polypeptide is Nucleolar protein 56 (Caenorhabditis elegans).